Reading from the N-terminus, the 298-residue chain is Inosose dehydratase (298 aa).

The protein belongs to the IolE/MocC family. Glutathione serves as cofactor. Requires Co(2+) as cofactor. The cofactor is Mn(2+).

The enzyme catalyses scyllo-inosose = 3D-3,5/4-trihydroxycyclohexane-1,2-dione + H2O. Its function is as follows. Catalyzes the dehydration of inosose (2-keto-myo-inositol, 2KMI or 2,4,6/3,5-pentahydroxycyclohexanone) to 3D-(3,5/4)-trihydroxycyclohexane-1,2-dione (D-2,3-diketo-4-deoxy-epi-inositol). This Histophilus somni (strain 129Pt) (Haemophilus somnus) protein is Inosose dehydratase.